Reading from the N-terminus, the 31-residue chain is Cytochrome b6-f complex subunit 6 (31 aa).

Residues V3 to I23 form a helical membrane-spanning segment.

The protein belongs to the PetL family. The 4 large subunits of the cytochrome b6-f complex are cytochrome b6, subunit IV (17 kDa polypeptide, PetD), cytochrome f and the Rieske protein, while the 4 small subunits are PetG, PetL, PetM and PetN. The complex functions as a dimer.

Its subcellular location is the plastid. The protein localises to the chloroplast thylakoid membrane. Its function is as follows. Component of the cytochrome b6-f complex, which mediates electron transfer between photosystem II (PSII) and photosystem I (PSI), cyclic electron flow around PSI, and state transitions. PetL is important for photoautotrophic growth as well as for electron transfer efficiency and stability of the cytochrome b6-f complex. The polypeptide is Cytochrome b6-f complex subunit 6 (Phaeodactylum tricornutum (strain CCAP 1055/1)).